The chain runs to 297 residues: F-actin-capping protein subunit beta (297 aa).

The span at 276–289 (DLSGKESDDKRQSE) shows a compositional bias: basic and acidic residues. The interval 276 to 297 (DLSGKESDDKRQSELVKGLQSL) is disordered.

It belongs to the F-actin-capping protein beta subunit family. In terms of assembly, component of the F-actin capping complex, composed of a heterodimer of an alpha and a beta subunit.

Its subcellular location is the cytoplasm. It is found in the cytoskeleton. It localises to the actin patch. Its function is as follows. F-actin-capping proteins bind in a Ca(2+)-independent manner to the fast growing ends of actin filaments (barbed end) thereby blocking the exchange of subunits at these ends. Unlike other capping proteins (such as gelsolin and severin), these proteins do not sever actin filaments. This is F-actin-capping protein subunit beta (CAP2) from Debaryomyces hansenii (strain ATCC 36239 / CBS 767 / BCRC 21394 / JCM 1990 / NBRC 0083 / IGC 2968) (Yeast).